The following is a 58-amino-acid chain: uncharacterized protein (58 aa).

This is an uncharacterized protein from Enterobacteria phage T4 (Bacteriophage T4).